The following is a 1205-amino-acid chain: MGDMANNSVAYSGVKNAVKEANHGEFGVTLAELRSLMELRATDALHKIQECYGDVQGICTKLKTSPNEGLSGNPADIERREAVFGKNFIPPKKPKTFLQLVWEALQDVTLIILEIAAVVSLGLSFYQPPGGNEALCGSVNVGEEEEESEAGWIEGAAILLSVVCVVLVTAFNDWSKEKQFRGLQSRIEQEQKFTVIRGGQVIQIPVADIIVGDIAQVKYGDLLPADGILIQGNDLKIDESSLTGESDHVKKSLDRDPMLLSGTHVMEGSGRMVVTAVGVNSQTGIIFTLLGAGGDEEEKEKEKKDKKTKAQDGAAMEMQPLKSEDGVDGDEKDKKRSNLPKKEKSVLQGKLTKLAVQIGKAGLLMSAITVIILVLYFVIDTSWVQKRPWLAECTPIYIQYFVKFFIIGVTVLVVAVPEGLPLAVTISLAYSVKKMMRDNNLVRHLDACETMGNATAICSDKTGTLTMNRMTVVQAYISEKHYKKIPAPEAIPENIMAYLVTGISVNCAYTSKILPPEKEGGLPRHVGNKTECALLGFLLDLKRDYQDVRNEIPEEKLHKVYTFNSVRKSMSTVLKNSDGSFRIFSKGASEIVLKKCFKILSADGEPKVFRPRDRDDIVKTVIEPMASEGLRTICLAFRDFPAGEPEPEWDNENDIVTGLTCIAVVGIEDPVRPEVPDAIKKCQRAGITVRMVTGDNINTARAIALKCGILNPGEDFLCLEGKDFNRRIRNEKGEIEQERIDKIWPKLRVLARSSPTDKHTLVKGIIDSTIFDQRQVVAVTGDGTNDGPALKKADVGFAMGIAGTDVAKEASDIILTDDNFTSIVKAVMWGRNVYDSISKFLQFQLTVNVVAVIVAFTGACITQDSPLKAVQMLWVNLIMDTLASLALATEPPTEALLLRKPYGRNKPLISRTMMKNILGHAFYQLVVVFTLLFAGEKIFDIDSGRNAPLHAPPSEHYTIVFNTFVMMQLFNEINARKIHGERNVFEGIFNNAIFCTIVLGTFVVQIIIVQFGGKPFSCSKLSIEQWLWSVFLGMGTLLWGQLISTIPTSRLKFLKEAGHGTQKEEIPEEELAEDVEEIDHAERELRRGQILWFRGLNRIQTQIRVVNAFRSSLYEGLEKPETRSSIHNFMTHPEFRIEDSEPHIPLIDDTDAEDDAPTKRNSTPPPSPNKNNNAVDSGIHLTTDMNKSATSSSPGSPLHSLETSL.

The Cytoplasmic portion of the chain corresponds to 2 to 104 (GDMANNSVAY…KTFLQLVWEA (103 aa)). Residues 94-111 (PKTFLQLVWEALQDVTLI) form a calmodulin-binding subdomain A region. Residues 105–125 (LQDVTLIILEIAAVVSLGLSF) traverse the membrane as a helical segment. Residues 126–153 (YQPPGGNEALCGSVNVGEEEEESEAGWI) lie on the Extracellular side of the membrane. Residues 154–174 (EGAAILLSVVCVVLVTAFNDW) traverse the membrane as a helical segment. At 175–351 (SKEKQFRGLQ…KEKSVLQGKL (177 aa)) the chain is on the cytoplasmic side. The interval 296 to 343 (EEEKEKEKKDKKTKAQDGAAMEMQPLKSEDGVDGDEKDKKRSNLPKKE) is disordered. Composition is skewed to basic and acidic residues over residues 300–310 (EKEKKDKKTKA) and 322–343 (KSEDGVDGDEKDKKRSNLPKKE). A helical transmembrane segment spans residues 352–371 (TKLAVQIGKAGLLMSAITVI). Over 372–403 (ILVLYFVIDTSWVQKRPWLAECTPIYIQYFVK) the chain is Extracellular. A helical membrane pass occupies residues 404-424 (FFIIGVTVLVVAVPEGLPLAV). The Cytoplasmic segment spans residues 425 to 840 (TISLAYSVKK…RNVYDSISKF (416 aa)). The active-site 4-aspartylphosphate intermediate is Asp-460. Residues Asp-460, Thr-462, and Asp-782 each coordinate Mg(2+). Residues 841–861 (LQFQLTVNVVAVIVAFTGACI) traverse the membrane as a helical segment. Over 862-868 (TQDSPLK) the chain is Extracellular. The chain crosses the membrane as a helical span at residues 869–889 (AVQMLWVNLIMDTLASLALAT). At 890–912 (EPPTEALLLRKPYGRNKPLISRT) the chain is on the cytoplasmic side. A helical membrane pass occupies residues 913-933 (MMKNILGHAFYQLVVVFTLLF). At 934-956 (AGEKIFDIDSGRNAPLHAPPSEH) the chain is on the extracellular side. A helical transmembrane segment spans residues 957 to 976 (YTIVFNTFVMMQLFNEINAR). At 977–990 (KIHGERNVFEGIFN) the chain is on the cytoplasmic side. The chain crosses the membrane as a helical span at residues 991–1012 (NAIFCTIVLGTFVVQIIIVQFG). Residues 1013–1024 (GKPFSCSKLSIE) lie on the Extracellular side of the membrane. Residues 1025 to 1045 (QWLWSVFLGMGTLLWGQLIST) traverse the membrane as a helical segment. At 1046 to 1205 (IPTSRLKFLK…SPLHSLETSL (160 aa)) the chain is on the cytoplasmic side. Thr-1101 carries the phosphothreonine; by PKC modification. The interval 1145 to 1205 (PLIDDTDAED…SPLHSLETSL (61 aa)) is disordered. The segment covering 1183 to 1205 (TDMNKSATSSSPGSPLHSLETSL) has biased composition (polar residues).

It belongs to the cation transport ATPase (P-type) (TC 3.A.3) family. Type IIB subfamily.

The protein localises to the cell membrane. The enzyme catalyses Ca(2+)(in) + ATP + H2O = Ca(2+)(out) + ADP + phosphate + H(+). Functionally, catalyzes the hydrolysis of ATP coupled with the transport of calcium from the cytoplasm to the extracellular space thereby maintaining intracellular calcium homeostasis. The chain is Plasma membrane calcium-transporting ATPase 1 from Gallus gallus (Chicken).